A 220-amino-acid chain; its full sequence is Ribose-5-phosphate isomerase A (220 aa).

Substrate is bound by residues 28–31 (TGST), 81–84 (DGAD), and 94–97 (KGGG). The active-site Proton acceptor is E103. K121 is a binding site for substrate.

The protein belongs to the ribose 5-phosphate isomerase family. In terms of assembly, homodimer.

The enzyme catalyses aldehydo-D-ribose 5-phosphate = D-ribulose 5-phosphate. The protein operates within carbohydrate degradation; pentose phosphate pathway; D-ribose 5-phosphate from D-ribulose 5-phosphate (non-oxidative stage): step 1/1. Catalyzes the reversible conversion of ribose-5-phosphate to ribulose 5-phosphate. The sequence is that of Ribose-5-phosphate isomerase A from Shewanella baltica (strain OS185).